The chain runs to 126 residues: uncharacterized protein (126 aa).

Residues methionine 1 to valine 28 lie on the Cytoplasmic side of the membrane. A helical membrane pass occupies residues valine 29–isoleucine 49. The Extracellular segment spans residues aspartate 50–serine 75. The chain crosses the membrane as a helical span at residues valine 76–isoleucine 96. Position 97 (glycine 97) is a topological domain, cytoplasmic. Residues histidine 98 to alanine 118 form a helical membrane-spanning segment. Over glutamate 119–threonine 126 the chain is Extracellular.

It is found in the membrane. This is an uncharacterized protein from Saccharomyces cerevisiae (strain ATCC 204508 / S288c) (Baker's yeast).